The sequence spans 77 residues: Coiled-coil-helix-coiled-coil-helix domain-containing protein C550.01c (77 aa).

The CHCH domain occupies 24 to 65 (KGGCVEEHLRLNDCYWDTHDWRKCTEQMEEFRKCWEKRHGPL). 2 consecutive short sequence motifs (cx9C motif) follow at residues 27-37 (CVEEHLRLNDC) and 47-57 (CTEQMEEFRKC). Disulfide bonds link Cys27-Cys57 and Cys37-Cys47.

It localises to the cytoplasm. The protein localises to the nucleus. The sequence is that of Coiled-coil-helix-coiled-coil-helix domain-containing protein C550.01c from Schizosaccharomyces pombe (strain 972 / ATCC 24843) (Fission yeast).